The chain runs to 486 residues: Galactose-1-phosphate uridylyltransferase (486 aa).

It belongs to the galactose-1-phosphate uridylyltransferase type 2 family.

The protein resides in the cytoplasm. It carries out the reaction alpha-D-galactose 1-phosphate + UDP-alpha-D-glucose = alpha-D-glucose 1-phosphate + UDP-alpha-D-galactose. Its pathway is carbohydrate metabolism; galactose metabolism. This Pediococcus pentosaceus (strain ATCC 25745 / CCUG 21536 / LMG 10740 / 183-1w) protein is Galactose-1-phosphate uridylyltransferase.